We begin with the raw amino-acid sequence, 276 residues long: Ribosomal RNA small subunit methyltransferase A (276 aa).

S-adenosyl-L-methionine-binding residues include asparagine 27, leucine 29, glycine 54, glutamate 75, aspartate 101, and asparagine 123.

This sequence belongs to the class I-like SAM-binding methyltransferase superfamily. rRNA adenine N(6)-methyltransferase family. RsmA subfamily.

It localises to the cytoplasm. It catalyses the reaction adenosine(1518)/adenosine(1519) in 16S rRNA + 4 S-adenosyl-L-methionine = N(6)-dimethyladenosine(1518)/N(6)-dimethyladenosine(1519) in 16S rRNA + 4 S-adenosyl-L-homocysteine + 4 H(+). Specifically dimethylates two adjacent adenosines (A1518 and A1519) in the loop of a conserved hairpin near the 3'-end of 16S rRNA in the 30S particle. May play a critical role in biogenesis of 30S subunits. The protein is Ribosomal RNA small subunit methyltransferase A of Bartonella henselae (strain ATCC 49882 / DSM 28221 / CCUG 30454 / Houston 1) (Rochalimaea henselae).